A 398-amino-acid chain; its full sequence is NADH-quinone oxidoreductase subunit D (398 aa).

The protein belongs to the complex I 49 kDa subunit family. NDH-1 is composed of 14 different subunits. Subunits NuoB, C, D, E, F, and G constitute the peripheral sector of the complex.

It localises to the cell inner membrane. The enzyme catalyses a quinone + NADH + 5 H(+)(in) = a quinol + NAD(+) + 4 H(+)(out). In terms of biological role, NDH-1 shuttles electrons from NADH, via FMN and iron-sulfur (Fe-S) centers, to quinones in the respiratory chain. The immediate electron acceptor for the enzyme in this species is believed to be ubiquinone. Couples the redox reaction to proton translocation (for every two electrons transferred, four hydrogen ions are translocated across the cytoplasmic membrane), and thus conserves the redox energy in a proton gradient. The polypeptide is NADH-quinone oxidoreductase subunit D (Bradyrhizobium sp. (strain ORS 278)).